The chain runs to 116 residues: Distal membrane-arm assembly complex protein 1 (116 aa).

The segment at 1 to 39 (MGSRLSQPFESYITAPPGTAAAPAKPAPPATPGAPTSPA) is disordered. Low complexity predominate over residues 14–24 (TAPPGTAAAPA). Transmembrane regions (helical) follow at residues 52–69 (VLSG…YWVA) and 82–104 (WTIT…GIVV).

Interacts with incompletely assembled mitochondrial NADH:ubiquinone oxidoreductase complex (complex I).

Its subcellular location is the mitochondrion inner membrane. Functionally, required for the assembly of the mitochondrial NADH:ubiquinone oxidoreductase complex (complex I). Involved in the assembly of the distal region of complex I. The protein is Distal membrane-arm assembly complex protein 1 of Homo sapiens (Human).